An 87-amino-acid chain; its full sequence is ParB-like nuclease domain-containing protein YnaK (87 aa).

This Escherichia coli (strain K12) protein is ParB-like nuclease domain-containing protein YnaK (ynaK).